The chain runs to 423 residues: 3-phosphoshikimate 1-carboxyvinyltransferase (423 aa).

3-phosphoshikimate contacts are provided by lysine 19, serine 20, and arginine 24. Lysine 19 provides a ligand contact to phosphoenolpyruvate. 2 residues coordinate phosphoenolpyruvate: glycine 89 and arginine 118. 6 residues coordinate 3-phosphoshikimate: serine 164, serine 165, glutamine 166, serine 192, aspartate 304, and lysine 331. Glutamine 166 lines the phosphoenolpyruvate pocket. The active-site Proton acceptor is the aspartate 304. Phosphoenolpyruvate is bound by residues arginine 335 and arginine 377.

The protein belongs to the EPSP synthase family. In terms of assembly, monomer.

Its subcellular location is the cytoplasm. The catalysed reaction is 3-phosphoshikimate + phosphoenolpyruvate = 5-O-(1-carboxyvinyl)-3-phosphoshikimate + phosphate. It participates in metabolic intermediate biosynthesis; chorismate biosynthesis. Catalyzes the transfer of the enolpyruvyl moiety of phosphoenolpyruvate (PEP) to the 5-hydroxyl of shikimate-3-phosphate (S3P) to produce enolpyruvyl shikimate-3-phosphate and inorganic phosphate. The chain is 3-phosphoshikimate 1-carboxyvinyltransferase from Korarchaeum cryptofilum (strain OPF8).